The primary structure comprises 432 residues: Trigger factor (432 aa).

Residues 161-246 (GKRVSIDFVG…VNKVEARQLP (86 aa)) enclose the PPIase FKBP-type domain.

It belongs to the FKBP-type PPIase family. Tig subfamily.

It is found in the cytoplasm. It carries out the reaction [protein]-peptidylproline (omega=180) = [protein]-peptidylproline (omega=0). Involved in protein export. Acts as a chaperone by maintaining the newly synthesized protein in an open conformation. Functions as a peptidyl-prolyl cis-trans isomerase. In Vibrio vulnificus (strain YJ016), this protein is Trigger factor.